The chain runs to 242 residues: ATP-dependent dethiobiotin synthetase BioD (242 aa).

12 to 17 (EVGKTV) lines the ATP pocket. Position 16 (threonine 16) interacts with Mg(2+). Residue lysine 37 is part of the active site. Serine 41 provides a ligand contact to substrate. ATP contacts are provided by residues aspartate 51 and 112–115 (EGAG). Positions 51 and 112 each coordinate Mg(2+).

The protein belongs to the dethiobiotin synthetase family. Homodimer. It depends on Mg(2+) as a cofactor.

The protein localises to the cytoplasm. The enzyme catalyses (7R,8S)-7,8-diammoniononanoate + CO2 + ATP = (4R,5S)-dethiobiotin + ADP + phosphate + 3 H(+). Its pathway is cofactor biosynthesis; biotin biosynthesis; biotin from 7,8-diaminononanoate: step 1/2. Functionally, catalyzes a mechanistically unusual reaction, the ATP-dependent insertion of CO2 between the N7 and N8 nitrogen atoms of 7,8-diaminopelargonic acid (DAPA, also called 7,8-diammoniononanoate) to form a ureido ring. The polypeptide is ATP-dependent dethiobiotin synthetase BioD (Bacillus cereus (strain B4264)).